The sequence spans 678 residues: RxLR effector protein PITG_16705 (678 aa).

An N-terminal signal peptide occupies residues 1–20 (MHLFFLTAVAFVITSVSVDA). The RxLR-dEER signature appears at 46-61 (RLLRKNSTVDLVGEER).

The protein belongs to the RxLR effector family.

The protein localises to the secreted. It localises to the host cytoplasm. In terms of biological role, effector that enhances P.infestans colonization of Nicotiana benthamiana leaves. This Phytophthora infestans (strain T30-4) (Potato late blight agent) protein is RxLR effector protein PITG_16705.